The primary structure comprises 222 residues: UPF0758 protein YPN_3801 (222 aa).

Residues 100–222 (VLLNPGITQK…CVSFAERGWL (123 aa)) enclose the MPN domain. 3 residues coordinate Zn(2+): His171, His173, and Asp184. The JAMM motif signature appears at 171–184 (HNHPSGKAEPSQAD).

It belongs to the UPF0758 family. YicR subfamily.

The polypeptide is UPF0758 protein YPN_3801 (Yersinia pestis bv. Antiqua (strain Nepal516)).